The primary structure comprises 591 residues: L-fucose isomerase (591 aa).

Residues glutamate 337 and aspartate 361 each act as proton acceptor in the active site. 3 residues coordinate Mn(2+): glutamate 337, aspartate 361, and histidine 528.

This sequence belongs to the L-fucose isomerase family. Homohexamer. Requires Mn(2+) as cofactor.

Its subcellular location is the cytoplasm. The catalysed reaction is L-fucose = L-fuculose. The protein operates within carbohydrate degradation; L-fucose degradation; L-lactaldehyde and glycerone phosphate from L-fucose: step 1/3. Converts the aldose L-fucose into the corresponding ketose L-fuculose. This Escherichia coli O139:H28 (strain E24377A / ETEC) protein is L-fucose isomerase.